The sequence spans 82 residues: UPF0337 protein PP_2059 (82 aa).

Belongs to the UPF0337 (CsbD) family.

The polypeptide is UPF0337 protein PP_2059 (Pseudomonas putida (strain ATCC 47054 / DSM 6125 / CFBP 8728 / NCIMB 11950 / KT2440)).